The primary structure comprises 259 residues: Ferritin-2, chloroplastic (259 aa).

The N-terminal 52 residues, 1–52 (MLLKLAPAFTLLNSHGENLSPMLSTSSQGFVLKNFSTKSRNGLLVVCASKGS), are a transit peptide targeting the chloroplast. The tract at residues 53–85 (NTKPLTGVVFEPFEEVKKELMLVPTVPQVSLAR) is extension peptide (EP). The region spanning 86 to 239 (HKYSDQCEAA…EYVAQLRRVG (154 aa)) is the Ferritin-like diiron domain. Positions 103, 138, 141, and 221 each coordinate Fe cation.

This sequence belongs to the ferritin family. As to quaternary structure, oligomer of 24 subunits. There are two types of subunits: L (light) chain and H (heavy) chain. The major chain can be light or heavy, depending on the species and tissue type. The functional molecule forms a roughly spherical shell with a diameter of 12 nm and contains a central cavity into which the insoluble mineral iron core is deposited.

The protein resides in the plastid. The protein localises to the chloroplast. The enzyme catalyses 4 Fe(2+) + O2 + 4 H(+) = 4 Fe(3+) + 2 H2O. Its function is as follows. Stores iron in a soluble, non-toxic, readily available form. Important for iron homeostasis. Has ferroxidase activity. Iron is taken up in the ferrous form and deposited as ferric hydroxides after oxidation. This is Ferritin-2, chloroplastic (FER2) from Nicotiana tabacum (Common tobacco).